A 332-amino-acid chain; its full sequence is Mitoferrin-1 (332 aa).

Solcar repeat units follow at residues 31 to 119 (ASLG…IKRS), 129 to 213 (NSHI…MQEH), and 220 to 314 (YRPE…FKYF). The next 6 helical transmembrane spans lie at 33-52 (LGTH…TVMY), 94-113 (GLNI…FACY), 131-150 (HIAN…AVMN), 188-207 (SYST…FITY), 222-241 (PETH…AVTT), and 289-308 (GIQA…WSVY).

The protein belongs to the mitochondrial carrier (TC 2.A.29) family. Highly expressed in hematopoietic organs, Expressed in the intermediate cell mass (ICM), a tissue equivalent to the mammalian extraembryonic yolk-sac blood islands. Colocalizes with gata1.

It localises to the mitochondrion inner membrane. It carries out the reaction Fe(2+)(in) = Fe(2+)(out). Its function is as follows. Mitochondrial iron transporter that specifically mediates iron uptake in developing erythroid cells, thereby playing an essential role in heme biosynthesis. This is Mitoferrin-1 (slc25a37) from Danio rerio (Zebrafish).